The chain runs to 459 residues: MLKLYNSLTRQKEEFKPLQPGKVGMYVCGITIYDLCHIGHGRTFVSFDMIVRYLRYSGYDVNFLRNITDVDDKIIKRANENKESCESLTERLIGEMHRDFDALNMKRPDFEPRATLHIPEIIDMVEKLIEKEHAYVSGNGDVLFSVSSFPEYGRLSGQNLDQLQAGARVEVEDTKRDPMDFVLWKMSKPGEPTWESPWGPGRPGWHIECSAMNSKHLGQHFDIHGGGSDLQFPHHENEIAQSCCAHNTPYVNYWMHTGMVMVDKEKMSKSLNNFFTIRDVLEHYDAATVRYFLLSGHYRSQLNYSEDNLKQAKSALERLYTSLKGLDLSVEAASADEYVAKFKVAMDDDFNTPEAYSVLFEMVREINRLKEADNAKASSLGVKLKELADVLGILDQDVDTFFKGEGSTDEVAEIEALIAERNRARAEKDWPAADVARDGLNALGVILEDGPEGTTWRKK.

Residue Cys28 coordinates Zn(2+). A 'HIGH' region motif is present at residues 30–40; that stretch reads ITIYDLCHIGH. Residues Cys209, His234, and Glu238 each coordinate Zn(2+). The short motif at 266–270 is the 'KMSKS' region element; it reads KMSKS. Residue Lys269 participates in ATP binding.

Belongs to the class-I aminoacyl-tRNA synthetase family. Monomer. Zn(2+) is required as a cofactor.

Its subcellular location is the cytoplasm. The enzyme catalyses tRNA(Cys) + L-cysteine + ATP = L-cysteinyl-tRNA(Cys) + AMP + diphosphate. The chain is Cysteine--tRNA ligase from Shewanella sediminis (strain HAW-EB3).